The sequence spans 106 residues: Large ribosomal subunit protein uL24 (106 aa).

This sequence belongs to the universal ribosomal protein uL24 family. As to quaternary structure, part of the 50S ribosomal subunit.

One of two assembly initiator proteins, it binds directly to the 5'-end of the 23S rRNA, where it nucleates assembly of the 50S subunit. In terms of biological role, one of the proteins that surrounds the polypeptide exit tunnel on the outside of the subunit. This is Large ribosomal subunit protein uL24 from Verminephrobacter eiseniae (strain EF01-2).